A 206-amino-acid polypeptide reads, in one-letter code: Urease accessory protein UreG (206 aa).

Residue 11–18 coordinates GTP; the sequence is GPVGAGKT.

It belongs to the SIMIBI class G3E GTPase family. UreG subfamily. As to quaternary structure, homodimer. UreD, UreF and UreG form a complex that acts as a GTP-hydrolysis-dependent molecular chaperone, activating the urease apoprotein by helping to assemble the nickel containing metallocenter of UreC. The UreE protein probably delivers the nickel.

It is found in the cytoplasm. Its function is as follows. Facilitates the functional incorporation of the urease nickel metallocenter. This process requires GTP hydrolysis, probably effectuated by UreG. The sequence is that of Urease accessory protein UreG from Ureaplasma parvum serovar 3 (strain ATCC 700970).